Consider the following 64-residue polypeptide: Translation machinery-associated protein 7 homolog (64 aa).

The disordered stretch occupies residues 1–64; the sequence is MSGRQGGKAK…GGGIKKSGKK (64 aa). Residues 21 to 50 adopt a coiled-coil conformation; it reads DLSEEDVEFKKKQQEEAKKIKEMAAKAGQR. The span at 28-44 shows a compositional bias: basic and acidic residues; it reads EFKKKQQEEAKKIKEMA. The span at 53–64 shows a compositional bias: gly residues; the sequence is LLGGGIKKSGKK.

The protein belongs to the TMA7 family.

The sequence is that of Translation machinery-associated protein 7 homolog from Caenorhabditis briggsae.